A 1249-amino-acid chain; its full sequence is Protein STU1 (1249 aa).

Low complexity-rich tracts occupy residues 138 to 156 (LNSSGSLKAGSLSSSTATK) and 555 to 574 (AASPMPSYASSSSTGAPSSA). 6 disordered regions span residues 138–161 (LNSSGSLKAGSLSSSTATKSKPHE), 545–619 (KQLE…NPVF), 644–718 (HVET…LGLG), 755–846 (AEHE…NGNI), 860–891 (AFQTPLNPKTSALRSSSAIRTPAWKDSPRPEA), and 1084–1118 (HPAPPSSSADNSDPMTSALSQLSLSSSKESPEKRT). Residues 581-600 (KKMDLKAMLAERRRAVKEAG) are compositionally biased toward basic and acidic residues. Composition is skewed to low complexity over residues 647–667 (TSSPSPVRSPTPSSSATRIRP) and 708–718 (SPSLSPSLGLG). The segment covering 755–774 (AEHEVDELTLKEGQKTRDDG) has biased composition (basic and acidic residues). 3 stretches are compositionally biased toward polar residues: residues 809–822 (QQGNTFSTSTSGRV), 831–844 (ATGTTASLPNSRNG), and 863–878 (TPLNPKTSALRSSSAI). The segment covering 1089 to 1111 (SSSADNSDPMTSALSQLSLSSSK) has biased composition (low complexity).

It belongs to the CLASP family. Interacts with microtubules.

Its subcellular location is the cytoplasm. It is found in the cytoskeleton. The protein resides in the nucleus. The protein localises to the spindle. Microtubule binding protein that promotes the stabilization of dynamic microtubules. Required for mitotic spindle formation. The protein is Protein STU1 (STU1) of Cryptococcus neoformans var. neoformans serotype D (strain JEC21 / ATCC MYA-565) (Filobasidiella neoformans).